The following is a 363-amino-acid chain: Dihydroorotate dehydrogenase (quinone) (363 aa).

FMN is bound by residues 77–81 and Thr-101; that span reads AGMDK. Substrate is bound at residue Lys-81. 126-130 lines the substrate pocket; that stretch reads NRMGF. FMN contacts are provided by Ser-155 and Asn-188. Asn-188 is a substrate binding site. The active-site Nucleophile is the Ser-191. Residue Asn-193 coordinates substrate. Residues Lys-234 and Thr-262 each coordinate FMN. 263–264 contacts substrate; sequence NT. Residues Gly-287, Gly-316, and 337–338 each bind FMN; that span reads YT.

Belongs to the dihydroorotate dehydrogenase family. Type 2 subfamily. Monomer. The cofactor is FMN.

Its subcellular location is the cell membrane. The catalysed reaction is (S)-dihydroorotate + a quinone = orotate + a quinol. The protein operates within pyrimidine metabolism; UMP biosynthesis via de novo pathway; orotate from (S)-dihydroorotate (quinone route): step 1/1. Its function is as follows. Catalyzes the conversion of dihydroorotate to orotate with quinone as electron acceptor. This chain is Dihydroorotate dehydrogenase (quinone), found in Chloroflexus aurantiacus (strain ATCC 29366 / DSM 635 / J-10-fl).